A 471-amino-acid chain; its full sequence is MVAVAILAAGRGTRMKSDLPKVLHQLGSCTLVKRVIKSCVSIQPSKIMVIVGYRGGLVQKSLLDNNNNIDNDNTPTLEFVEQTEQLGTGHAIQQLLPYLKDFSEELLVLNGDVPLLRPETIKQLIDTHQQNKNSATILTANLPNPKGYGRIFCNTNNFVTQIVEERDCTAAQTKNHRVNAGVYCFNWPALANILPKLKADNDQQEYYLTDVVPLLDPVMAVDVNDYQEIFGINNRKHLAKAHEILQVRVKDDWMEAGVTLIDPDSITIDDTVLLQQDVIVEPQTHIRGSSIIGSGSRIGPGSLIENSHIGKNTSVLYSVISDSMVADNTRIGPYAHLRGDSQVGSHCRIGNFVELKKATVGDRSNAAHLSYLGDATLGEKVNIGAGTITANYDGVKKHKTKIGDRSKTGSNSVLVAPVTLGEDVTVAAGSVVTKNVEDDSLVIGRARQAVKKGWRLKQSDESKKEENKSSP.

Positions 1–235 (MVAVAILAAG…YQEIFGINNR (235 aa)) are pyrophosphorylase. UDP-N-acetyl-alpha-D-glucosamine-binding positions include 7–10 (LAAG), K21, Q82, and 87–88 (GT). D112 is a binding site for Mg(2+). Residues G149, E164, N179, and N233 each contribute to the UDP-N-acetyl-alpha-D-glucosamine site. N233 lines the Mg(2+) pocket. The segment at 236–256 (KHLAKAHEILQVRVKDDWMEA) is linker. An N-acetyltransferase region spans residues 257 to 471 (GVTLIDPDSI…SKKEENKSSP (215 aa)). Residues R338 and K356 each contribute to the UDP-N-acetyl-alpha-D-glucosamine site. H368 acts as the Proton acceptor in catalysis. UDP-N-acetyl-alpha-D-glucosamine-binding residues include Y371 and N382. Acetyl-CoA-binding positions include A385, 391-392 (NY), S410, A428, and R445.

The protein in the N-terminal section; belongs to the N-acetylglucosamine-1-phosphate uridyltransferase family. It in the C-terminal section; belongs to the transferase hexapeptide repeat family. Homotrimer. The cofactor is Mg(2+).

It localises to the cytoplasm. It catalyses the reaction alpha-D-glucosamine 1-phosphate + acetyl-CoA = N-acetyl-alpha-D-glucosamine 1-phosphate + CoA + H(+). It carries out the reaction N-acetyl-alpha-D-glucosamine 1-phosphate + UTP + H(+) = UDP-N-acetyl-alpha-D-glucosamine + diphosphate. It functions in the pathway nucleotide-sugar biosynthesis; UDP-N-acetyl-alpha-D-glucosamine biosynthesis; N-acetyl-alpha-D-glucosamine 1-phosphate from alpha-D-glucosamine 6-phosphate (route II): step 2/2. It participates in nucleotide-sugar biosynthesis; UDP-N-acetyl-alpha-D-glucosamine biosynthesis; UDP-N-acetyl-alpha-D-glucosamine from N-acetyl-alpha-D-glucosamine 1-phosphate: step 1/1. Its pathway is bacterial outer membrane biogenesis; LPS lipid A biosynthesis. Catalyzes the last two sequential reactions in the de novo biosynthetic pathway for UDP-N-acetylglucosamine (UDP-GlcNAc). The C-terminal domain catalyzes the transfer of acetyl group from acetyl coenzyme A to glucosamine-1-phosphate (GlcN-1-P) to produce N-acetylglucosamine-1-phosphate (GlcNAc-1-P), which is converted into UDP-GlcNAc by the transfer of uridine 5-monophosphate (from uridine 5-triphosphate), a reaction catalyzed by the N-terminal domain. This is Bifunctional protein GlmU from Trichodesmium erythraeum (strain IMS101).